We begin with the raw amino-acid sequence, 20 residues long: Pregnancy-associated glycoprotein 67A (20 aa).

2 N-linked (GlcNAc...) asparagine glycosylation sites follow: Asn-4 and Asn-20.

Belongs to the peptidase A1 family. Chorionic epithelium (trophectoderm) and placental cotyledons.

The protein localises to the secreted. Its subcellular location is the extracellular space. The protein is Pregnancy-associated glycoprotein 67A of Bison bonasus (European bison).